Reading from the N-terminus, the 305-residue chain is Glycine--tRNA ligase alpha subunit (305 aa).

It belongs to the class-II aminoacyl-tRNA synthetase family. Tetramer of two alpha and two beta subunits.

The protein localises to the cytoplasm. The enzyme catalyses tRNA(Gly) + glycine + ATP = glycyl-tRNA(Gly) + AMP + diphosphate. The protein is Glycine--tRNA ligase alpha subunit of Streptococcus suis (strain 05ZYH33).